The chain runs to 222 residues: TPR repeat-containing protein BH2049 (222 aa).

TPR repeat units lie at residues 34–67 and 169–202; these read AEPLFHLGNIHYAYGHKASAMNYWKEAVSKNREH and PVGLKILGISSIRTNQYEAGLTFLEKSLELKEDK.

The sequence is that of TPR repeat-containing protein BH2049 from Halalkalibacterium halodurans (strain ATCC BAA-125 / DSM 18197 / FERM 7344 / JCM 9153 / C-125) (Bacillus halodurans).